The chain runs to 208 residues: HTLV-1 basic zipper factor (208 aa).

The tract at residues 59–93 is disordered; the sequence is RLRWGPVGEEAPPRGETHRDRQRRAEEKRKRKRER. The segment covering 69–86 has biased composition (basic and acidic residues); it reads APPRGETHRDRQRRAEEK. Short sequence motifs (nuclear localization signal) lie at residues 86–91, 115–119, and 136–140; these read KRKRKR, RRRRA, and RRERK. The segment covering 125–143 has biased composition (basic and acidic residues); it reads DRARRKLEEEERRERKWRQ. The tract at residues 125-160 is disordered; the sequence is DRARRKLEEEERRERKWRQTEQGAKQRSARKEKMTE.

This sequence belongs to the HTLV-1 HBZ protein family. As to quaternary structure, interacts with host ATF4; this interaction inhibits viral RNA transcriptional activation by preventing ATF4 binding to Tax-responsive elements. Interacts with host CREB1; this interaction inhibits host CREB1 transcriptional activity. Interacts with host JUN, JUNB and JUND. Interacts with host EP300.

The protein resides in the host nucleus. Its function is as follows. Contributes to the regulation of viral RNA transcription by interacting with host proteins involved in transcriptional activation such as ATF4, or CREB1, and by inhibiting their activity. Additionally, HBZ suppresses host NF-kappa-B-driven transcription mediated by host RELA as well as transcription of some classical NF-kappa-B target genes, including IL8, IL2RA, IRF4, VCAM1, and VEGFA. In Human T-cell leukemia virus 1 (isolate Melanesia mel5 subtype C) (HTLV-1), this protein is HTLV-1 basic zipper factor (HBZ).